The following is a 419-amino-acid chain: UPF0761 membrane protein ACIAD3168 (419 aa).

A run of 6 helical transmembrane segments spans residues alanine 42–isoleucine 62, leucine 105–glutamate 125, tryptophan 148–valine 168, alanine 186–tryptophan 206, threonine 212–leucine 232, and alanine 252–leucine 272.

The protein belongs to the UPF0761 family.

The protein resides in the cell inner membrane. This is UPF0761 membrane protein ACIAD3168 from Acinetobacter baylyi (strain ATCC 33305 / BD413 / ADP1).